We begin with the raw amino-acid sequence, 644 residues long: DNA mismatch repair protein MutL (644 aa).

The protein belongs to the DNA mismatch repair MutL/HexB family.

In terms of biological role, this protein is involved in the repair of mismatches in DNA. It is required for dam-dependent methyl-directed DNA mismatch repair. May act as a 'molecular matchmaker', a protein that promotes the formation of a stable complex between two or more DNA-binding proteins in an ATP-dependent manner without itself being part of a final effector complex. This chain is DNA mismatch repair protein MutL, found in Chlorobium chlorochromatii (strain CaD3).